A 161-amino-acid polypeptide reads, in one-letter code: UPF0178 protein BSUIS_A1819 (161 aa).

It belongs to the UPF0178 family.

The polypeptide is UPF0178 protein BSUIS_A1819 (Brucella suis (strain ATCC 23445 / NCTC 10510)).